The chain runs to 199 residues: Fe/S biogenesis protein NfuA (199 aa).

The [4Fe-4S] cluster site is built by Cys151 and Cys154.

The protein belongs to the NfuA family. Homodimer. The cofactor is [4Fe-4S] cluster.

Involved in iron-sulfur cluster biogenesis. Binds a 4Fe-4S cluster, can transfer this cluster to apoproteins, and thereby intervenes in the maturation of Fe/S proteins. Could also act as a scaffold/chaperone for damaged Fe/S proteins. In Stenotrophomonas maltophilia (strain K279a), this protein is Fe/S biogenesis protein NfuA.